The sequence spans 317 residues: Acetyl-coenzyme A carboxylase carboxyl transferase subunit alpha (317 aa).

One can recognise a CoA carboxyltransferase C-terminal domain in the interval 40–294; sequence RLQHKSQELT…KQQILADLAE (255 aa).

Belongs to the AccA family. Acetyl-CoA carboxylase is a heterohexamer composed of biotin carboxyl carrier protein (AccB), biotin carboxylase (AccC) and two subunits each of ACCase subunit alpha (AccA) and ACCase subunit beta (AccD).

The protein localises to the cytoplasm. The catalysed reaction is N(6)-carboxybiotinyl-L-lysyl-[protein] + acetyl-CoA = N(6)-biotinyl-L-lysyl-[protein] + malonyl-CoA. It functions in the pathway lipid metabolism; malonyl-CoA biosynthesis; malonyl-CoA from acetyl-CoA: step 1/1. In terms of biological role, component of the acetyl coenzyme A carboxylase (ACC) complex. First, biotin carboxylase catalyzes the carboxylation of biotin on its carrier protein (BCCP) and then the CO(2) group is transferred by the carboxyltransferase to acetyl-CoA to form malonyl-CoA. The sequence is that of Acetyl-coenzyme A carboxylase carboxyl transferase subunit alpha from Haemophilus ducreyi (strain 35000HP / ATCC 700724).